The chain runs to 120 residues: Large ribosomal subunit protein uL18 (120 aa).

The protein belongs to the universal ribosomal protein uL18 family. In terms of assembly, part of the 50S ribosomal subunit; part of the 5S rRNA/L5/L18/L25 subcomplex. Contacts the 5S and 23S rRNAs.

Functionally, this is one of the proteins that bind and probably mediate the attachment of the 5S RNA into the large ribosomal subunit, where it forms part of the central protuberance. This is Large ribosomal subunit protein uL18 from Clostridium botulinum (strain Eklund 17B / Type B).